Reading from the N-terminus, the 434-residue chain is Tol-Pal system protein TolB (434 aa).

The signal sequence occupies residues 1 to 28 (MQQTCKRKIWMQISVALVTSLWMISAQA).

Belongs to the TolB family. In terms of assembly, the Tol-Pal system is composed of five core proteins: the inner membrane proteins TolA, TolQ and TolR, the periplasmic protein TolB and the outer membrane protein Pal. They form a network linking the inner and outer membranes and the peptidoglycan layer.

The protein localises to the periplasm. Functionally, part of the Tol-Pal system, which plays a role in outer membrane invagination during cell division and is important for maintaining outer membrane integrity. The chain is Tol-Pal system protein TolB from Alcanivorax borkumensis (strain ATCC 700651 / DSM 11573 / NCIMB 13689 / SK2).